A 238-amino-acid polypeptide reads, in one-letter code: Ribonuclease PH (238 aa).

Phosphate contacts are provided by residues Arg86 and 124–126 (GTR).

It belongs to the RNase PH family. As to quaternary structure, homohexameric ring arranged as a trimer of dimers.

The enzyme catalyses tRNA(n+1) + phosphate = tRNA(n) + a ribonucleoside 5'-diphosphate. Phosphorolytic 3'-5' exoribonuclease that plays an important role in tRNA 3'-end maturation. Removes nucleotide residues following the 3'-CCA terminus of tRNAs; can also add nucleotides to the ends of RNA molecules by using nucleoside diphosphates as substrates, but this may not be physiologically important. Probably plays a role in initiation of 16S rRNA degradation (leading to ribosome degradation) during starvation. The chain is Ribonuclease PH from Psychrobacter arcticus (strain DSM 17307 / VKM B-2377 / 273-4).